We begin with the raw amino-acid sequence, 287 residues long: Phosphatidylserine decarboxylase proenzyme (287 aa).

Catalysis depends on charge relay system; for autoendoproteolytic cleavage activity residues aspartate 89, histidine 146, and serine 252. Catalysis depends on serine 252, which acts as the Schiff-base intermediate with substrate; via pyruvic acid; for decarboxylase activity. Serine 252 carries the pyruvic acid (Ser); by autocatalysis modification.

Belongs to the phosphatidylserine decarboxylase family. PSD-B subfamily. Prokaryotic type I sub-subfamily. In terms of assembly, heterodimer of a large membrane-associated beta subunit and a small pyruvoyl-containing alpha subunit. Requires pyruvate as cofactor. Is synthesized initially as an inactive proenzyme. Formation of the active enzyme involves a self-maturation process in which the active site pyruvoyl group is generated from an internal serine residue via an autocatalytic post-translational modification. Two non-identical subunits are generated from the proenzyme in this reaction, and the pyruvate is formed at the N-terminus of the alpha chain, which is derived from the carboxyl end of the proenzyme. The autoendoproteolytic cleavage occurs by a canonical serine protease mechanism, in which the side chain hydroxyl group of the serine supplies its oxygen atom to form the C-terminus of the beta chain, while the remainder of the serine residue undergoes an oxidative deamination to produce ammonia and the pyruvoyl prosthetic group on the alpha chain. During this reaction, the Ser that is part of the protease active site of the proenzyme becomes the pyruvoyl prosthetic group, which constitutes an essential element of the active site of the mature decarboxylase.

The protein localises to the cell membrane. The catalysed reaction is a 1,2-diacyl-sn-glycero-3-phospho-L-serine + H(+) = a 1,2-diacyl-sn-glycero-3-phosphoethanolamine + CO2. Its pathway is phospholipid metabolism; phosphatidylethanolamine biosynthesis; phosphatidylethanolamine from CDP-diacylglycerol: step 2/2. Catalyzes the formation of phosphatidylethanolamine (PtdEtn) from phosphatidylserine (PtdSer). This chain is Phosphatidylserine decarboxylase proenzyme, found in Shewanella amazonensis (strain ATCC BAA-1098 / SB2B).